The primary structure comprises 74 residues: DNA-directed RNA polymerase subunit omega (74 aa).

Belongs to the RNA polymerase subunit omega family. In terms of assembly, the RNAP catalytic core consists of 2 alpha, 1 beta, 1 beta' and 1 omega subunit. When a sigma factor is associated with the core the holoenzyme is formed, which can initiate transcription.

The catalysed reaction is RNA(n) + a ribonucleoside 5'-triphosphate = RNA(n+1) + diphosphate. Functionally, promotes RNA polymerase assembly. Latches the N- and C-terminal regions of the beta' subunit thereby facilitating its interaction with the beta and alpha subunits. The chain is DNA-directed RNA polymerase subunit omega from Helicobacter acinonychis (strain Sheeba).